Here is a 340-residue protein sequence, read N- to C-terminus: DNA repair protein RAD51 homolog B (340 aa).

The disordered stretch occupies residues 1–22 (MSSSSAHQKASPPIEEEATEHG). The region spanning 49–78 (TVESVAYSPRKDLLQIKGISEAKVDKIIEA) is the HhH domain. 128–135 (GEFRSGKT) provides a ligand contact to ATP.

This sequence belongs to the RecA family. RAD51 subfamily. As to quaternary structure, self-associates and may interact with XRCC3 homolog. As to expression, highly expressed in mitotic and meiotic tissues, but low levels in differentiated tissues.

Its subcellular location is the nucleus. In terms of biological role, binds to single and double-stranded DNA and exhibits DNA-dependent ATPase activity. Unwinds duplex DNA. Component of the meiotic recombination pathway. Seems to play a role in mediating chromosome homology search, chromosome pairing and synapsis at early stages and probably chromosome crossing-over at later stages in meiosis. Probably is involved in the repair of meiotic double strand breaks (DBSs) and in homologous recombination. This Zea mays (Maize) protein is DNA repair protein RAD51 homolog B (RAD51B).